The primary structure comprises 67 residues: Kappa-conotoxin-like 2 (67 aa).

The N-terminal stretch at Met-1–Thr-26 is a signal peptide. 4 disulfide bridges follow: Cys-29–Cys-43, Cys-36–Cys-48, Cys-42–Cys-51, and Cys-47–Cys-55. Phe-59 is subject to Phenylalanine amide. The propeptide occupies Ala-63–Glu-67.

The protein belongs to the conotoxin I2 superfamily. As to expression, expressed by the venom duct.

The protein localises to the secreted. Functionally, inhibits the vertebrate voltage-gated potassium channels Kv1.1/KCNA1 and Kv1.3/KCNA3. The chain is Kappa-conotoxin-like 2 from Conus vexillum (Flag cone).